The chain runs to 294 residues: 4-hydroxybenzoate octaprenyltransferase (294 aa).

Helical transmembrane passes span 37–57, 101–121, 142–162, 169–189, 219–239, 241–261, and 271–293; these read LWAMWMAAGGPPGWTLFWIFF, LAVAAVLALIALALILPLNAL, FFAIPQAYLGIAFGFGIPMAF, VPFVAWLMLLANVFWAIAYDT, IMICYAVFLGLMAWAGSLLGL, WPYYAGLVAAAGMAGYHYTLI, and AAFRHNNWLGACVFAGTFVAYLL.

It belongs to the UbiA prenyltransferase family. Mg(2+) serves as cofactor.

It is found in the cell inner membrane. It carries out the reaction all-trans-octaprenyl diphosphate + 4-hydroxybenzoate = 4-hydroxy-3-(all-trans-octaprenyl)benzoate + diphosphate. The protein operates within cofactor biosynthesis; ubiquinone biosynthesis. Catalyzes the prenylation of para-hydroxybenzoate (PHB) with an all-trans polyprenyl group. Mediates the second step in the final reaction sequence of ubiquinone-8 (UQ-8) biosynthesis, which is the condensation of the polyisoprenoid side chain with PHB, generating the first membrane-bound Q intermediate 3-octaprenyl-4-hydroxybenzoate. This is 4-hydroxybenzoate octaprenyltransferase from Cupriavidus metallidurans (strain ATCC 43123 / DSM 2839 / NBRC 102507 / CH34) (Ralstonia metallidurans).